The primary structure comprises 208 residues: Meiotically up-regulated gene 9 protein (208 aa).

The tract at residues 77–114 (VPASNEKAARVSNLKTVPSLKRENKEVNANSKPPVKQQ) is disordered.

Its function is as follows. Has a role in meiosis. This chain is Meiotically up-regulated gene 9 protein (mug9), found in Schizosaccharomyces pombe (strain 972 / ATCC 24843) (Fission yeast).